The chain runs to 309 residues: Homoserine kinase (309 aa).

Residue 91–101 (PVGSGLGSSAC) coordinates ATP.

It belongs to the GHMP kinase family. Homoserine kinase subfamily.

The protein localises to the cytoplasm. The catalysed reaction is L-homoserine + ATP = O-phospho-L-homoserine + ADP + H(+). It functions in the pathway amino-acid biosynthesis; L-threonine biosynthesis; L-threonine from L-aspartate: step 4/5. Its function is as follows. Catalyzes the ATP-dependent phosphorylation of L-homoserine to L-homoserine phosphate. This chain is Homoserine kinase, found in Hamiltonella defensa subsp. Acyrthosiphon pisum (strain 5AT).